Here is a 469-residue protein sequence, read N- to C-terminus: Glutamate--tRNA ligase 1 (469 aa).

The 'HIGH' region motif lies at 10–20 (PSPTGYLHIGG). Residues C99, C101, C126, and D128 each contribute to the Zn(2+) site. The short motif at 237-241 (RLSKR) is the 'KMSKS' region element. ATP is bound at residue K240.

It belongs to the class-I aminoacyl-tRNA synthetase family. Glutamate--tRNA ligase type 1 subfamily. As to quaternary structure, monomer. Zn(2+) is required as a cofactor.

It is found in the cytoplasm. The enzyme catalyses tRNA(Glu) + L-glutamate + ATP = L-glutamyl-tRNA(Glu) + AMP + diphosphate. Functionally, catalyzes the attachment of glutamate to tRNA(Glu) in a two-step reaction: glutamate is first activated by ATP to form Glu-AMP and then transferred to the acceptor end of tRNA(Glu). The chain is Glutamate--tRNA ligase 1 from Coxiella burnetii (strain CbuK_Q154) (Coxiella burnetii (strain Q154)).